Reading from the N-terminus, the 492-residue chain is Glutamyl-tRNA(Gln) amidotransferase subunit A (492 aa).

Active-site charge relay system residues include Lys-84 and Ser-159. The Acyl-ester intermediate role is filled by Ser-183.

It belongs to the amidase family. GatA subfamily. As to quaternary structure, heterotrimer of A, B and C subunits.

It carries out the reaction L-glutamyl-tRNA(Gln) + L-glutamine + ATP + H2O = L-glutaminyl-tRNA(Gln) + L-glutamate + ADP + phosphate + H(+). Its function is as follows. Allows the formation of correctly charged Gln-tRNA(Gln) through the transamidation of misacylated Glu-tRNA(Gln) in organisms which lack glutaminyl-tRNA synthetase. The reaction takes place in the presence of glutamine and ATP through an activated gamma-phospho-Glu-tRNA(Gln). This chain is Glutamyl-tRNA(Gln) amidotransferase subunit A, found in Anaeromyxobacter sp. (strain K).